The primary structure comprises 510 residues: Bifunctional pantoate ligase/cytidylate kinase (510 aa).

Residues 1-276 (MNKIIIRKTE…CGKTRLIDHV (276 aa)) form a pantoate--beta-alanine ligase region. ATP is bound at residue 29–36 (MGNLHDGH). The active-site Proton donor is His36. Gln61 serves as a coordination point for (R)-pantoate. Gln61 contacts beta-alanine. 150-153 (GEKD) lines the ATP pocket. Residue Gln156 participates in (R)-pantoate binding. Residue 187-190 (FSSR) participates in ATP binding. A cytidylate kinase region spans residues 277 to 510 (FLMKRKPIIA…LNIPKEIQLE (234 aa)).

It in the N-terminal section; belongs to the pantothenate synthetase family. The protein in the C-terminal section; belongs to the cytidylate kinase family. Type 1 subfamily.

Its subcellular location is the cytoplasm. It catalyses the reaction (R)-pantoate + beta-alanine + ATP = (R)-pantothenate + AMP + diphosphate + H(+). The enzyme catalyses CMP + ATP = CDP + ADP. The catalysed reaction is dCMP + ATP = dCDP + ADP. The protein operates within cofactor biosynthesis; (R)-pantothenate biosynthesis; (R)-pantothenate from (R)-pantoate and beta-alanine: step 1/1. In terms of biological role, catalyzes the condensation of pantoate with beta-alanine in an ATP-dependent reaction via a pantoyl-adenylate intermediate. Catalyzes the transfer of a phosphate group from ATP to either CMP or dCMP to form CDP or dCDP and ADP, respectively. The sequence is that of Bifunctional pantoate ligase/cytidylate kinase from Prochlorococcus marinus subsp. pastoris (strain CCMP1986 / NIES-2087 / MED4).